We begin with the raw amino-acid sequence, 84 residues long: Cytoplasmic envelopment protein 3 (84 aa).

Gly2 is lipidated: N-myristoyl glycine; by host. The asp/Glu-rich (acidic) stretch occupies residues 40–46 (DLDDLRC).

This sequence belongs to the herpesviridae cytoplasmic envelopment protein 3 family. Interacts with cytoplasmic envelopment protein 2; this interaction is essential for the proper localization of each protein to the assembly complex and thus for the production of infectious virus. In terms of processing, myristoylation and palmitoylation (probably on one or more of the nearby cysteines at the N-terminus) enable membrane-binding and Golgi apparatus-specific targeting and are essential for efficient packaging. Post-translationally, phosphorylated. Phosphorylation does not seem to be required for recycling to the host Golgi apparatus. Packaging is selective for underphosphorylated forms.

It is found in the virion tegument. It localises to the virion membrane. The protein resides in the host cell membrane. Its subcellular location is the host Golgi apparatus membrane. In terms of biological role, plays an important role in the cytoplasmic envelopment of tegument proteins and capsids during the assembly and egress processes. Also participates in viral entry at the fusion step probably by regulating the core fusion machinery. In Gallus gallus (Chicken), this protein is Cytoplasmic envelopment protein 3 (MDV023).